The following is a 250-amino-acid chain: Transcriptional activator protein ExpR (250 aa).

The HTH luxR-type domain maps to 173 to 238; sequence KSQEADLFSQ…HAIRLGVEMN (66 aa). Positions 197-216 form a DNA-binding region, H-T-H motif; it reads YQEIALILGITTSTVKFHIG.

Belongs to the autoinducer-regulated transcriptional regulatory protein family.

In terms of biological role, functions as an OHLL responsive transcriptional regulator that acts in virulence (soft rot disease) through the activation of genes for plant tissue macerating enzymes. The polypeptide is Transcriptional activator protein ExpR (expR) (Dickeya dadantii (strain 3937) (Erwinia chrysanthemi (strain 3937))).